A 121-amino-acid chain; its full sequence is Small ribosomal subunit protein uS13 (121 aa).

Residues 91 to 121 (HRMSLPVRGQRTRTNARTRRGSRKTVAGRKK) form a disordered region. Positions 100-121 (QRTRTNARTRRGSRKTVAGRKK) are enriched in basic residues.

Belongs to the universal ribosomal protein uS13 family. Part of the 30S ribosomal subunit. Forms a loose heterodimer with protein S19. Forms two bridges to the 50S subunit in the 70S ribosome.

In terms of biological role, located at the top of the head of the 30S subunit, it contacts several helices of the 16S rRNA. In the 70S ribosome it contacts the 23S rRNA (bridge B1a) and protein L5 of the 50S subunit (bridge B1b), connecting the 2 subunits; these bridges are implicated in subunit movement. Contacts the tRNAs in the A and P-sites. The chain is Small ribosomal subunit protein uS13 from Prochlorococcus marinus (strain MIT 9301).